We begin with the raw amino-acid sequence, 1346 residues long: Proline-rich protein 36 (1346 aa).

Disordered regions lie at residues 1–403, 426–512, 537–606, 633–679, 711–1155, and 1168–1240; these read MDNK…TQLI, SVSS…QATP, PLTT…PSPL, PRQT…VSPL, LETQ…AELA, and PPLA…RSPK. The span at 10-26 shows a compositional bias: low complexity; that stretch reads AGAAARTPAARAPGLLT. Positions 27 to 40 are enriched in pro residues; the sequence is PRPPGSPRPPPPVT. Composition is skewed to low complexity over residues 41–55 and 86–97; these read PAAL…AVGR and SSRNPASRPPAS. Residues 137–152 show a composition bias toward basic and acidic residues; sequence SAEETVARGKATEAPK. The segment covering 165–177 has biased composition (low complexity); that stretch reads SGPTPGTPSPAMA. Positions 191 to 203 are enriched in pro residues; that stretch reads RPAPSARPRPPTE. Residues 208–220 are compositionally biased toward polar residues; the sequence is SVSSASEHSTTEP. 2 stretches are compositionally biased toward low complexity: residues 235-255 and 293-312; these read QRPA…PARS and APAL…PSGT. 3 stretches are compositionally biased toward pro residues: residues 329 to 343, 371 to 380, and 387 to 397; these read ATLP…PPPA, PLAPPSPSAP, and PSPPATPPSQV. Residues 426–464 are compositionally biased toward low complexity; that stretch reads SVSSPLQSMPPTQANPALPSLPTLLSPLATPPLSAMSPL. Residues 494-506 show a composition bias toward pro residues; sequence TPPPQASPSPSPP. Positions 546-558 are enriched in low complexity; sequence PPLVSPSLLASPP. Positions 559–578 are enriched in pro residues; the sequence is LQAPPHPQAPPSMTTPPMQA. Polar residues predominate over residues 633 to 647; the sequence is PRQTQASLISPSRPA. Pro residues predominate over residues 648–657; sequence STPPDSPPLQ. Residues 658–679 are compositionally biased toward low complexity; the sequence is APLSLPASPPLQTSLSPAVSPL. Over residues 724–733 the composition is skewed to polar residues; sequence TPPASLTTPP. Pro residues-rich tracts occupy residues 781–821 and 829–865; these read ETPP…PALA and PSPP…PPLS. Positions 866 to 875 are enriched in low complexity; sequence PLATPSPQAP. Pro residues-rich tracts occupy residues 887-917, 926-997, and 1004-1015; these read FSPP…PSQA, LQVP…PPAS, and AKPPPQAPPALA. Low complexity-rich tracts occupy residues 1029–1046, 1137–1146, and 1224–1239; these read FPGQ…MSPL, DSGPEGGAAA, and GKAA…SRSP. A Phosphoserine modification is found at Ser1310.

The chain is Proline-rich protein 36 from Homo sapiens (Human).